The chain runs to 210 residues: 2-hydroxy-3-keto-5-methylthiopentenyl-1-phosphate phosphatase (210 aa).

The protein belongs to the HAD-like hydrolase superfamily. MtnX family.

The catalysed reaction is 2-hydroxy-5-methylsulfanyl-3-oxopent-1-enyl phosphate + H2O = 1,2-dihydroxy-5-(methylsulfanyl)pent-1-en-3-one + phosphate. The protein operates within amino-acid biosynthesis; L-methionine biosynthesis via salvage pathway; L-methionine from S-methyl-5-thio-alpha-D-ribose 1-phosphate: step 4/6. Dephosphorylates 2-hydroxy-3-keto-5-methylthiopentenyl-1-phosphate (HK-MTPenyl-1-P) yielding 1,2-dihydroxy-3-keto-5-methylthiopentene (DHK-MTPene). The polypeptide is 2-hydroxy-3-keto-5-methylthiopentenyl-1-phosphate phosphatase (Microcystis aeruginosa).